The sequence spans 581 residues: Myoneurin (581 aa).

Residues 24–89 (CDCTIVIGEF…IYTGTLNLDS (66 aa)) enclose the BTB domain. The segment at 167 to 193 (PKQGALAKKSSQTKKKKKAFNSQKTGQ) is disordered. 2 short sequence motifs (nuclear localization signal) span residues 174 to 190 (KKSS…NSQK) and 256 to 261 (KRKRGK). Position 288 is a phosphoserine (Ser-288). C2H2-type zinc fingers lie at residues 301-323 (PMCN…MRIH), 329-351 (YVCH…VRTH), 357-380 (YKCE…RMHH), 386-408 (YKCD…ARKH), 414-436 (YVCD…VRRH), 442-464 (YVCD…SRKH), and 470-493 (FICE…TKVH).

The protein belongs to the krueppel C2H2-type zinc-finger protein family.

Its subcellular location is the nucleus. The sequence is that of Myoneurin (MYNN) from Bos taurus (Bovine).